A 704-amino-acid polypeptide reads, in one-letter code: Transcription factor HNF-4 homolog (704 aa).

The segment at 93–133 (SAGGGSASSGSNNNNSMFSPNNNLSGSGSGTNSSQQQLQQQ) is disordered. Positions 100–133 (SSGSNNNNSMFSPNNNLSGSGSGTNSSQQQLQQQ) are enriched in low complexity. Residues 139–214 (PTVCAICGDR…AGMKKEAVQN (76 aa)) constitute a DNA-binding region (nuclear receptor). NR C4-type zinc fingers lie at residues 142–162 (CAICGDRATGKHYGASSCDGC) and 178–197 (CRFARNCVVDKDKRNQCRYC). One can recognise an NR LBD domain in the interval 232-470 (GNGLSVISLV…SLLQEMLLGG (239 aa)). 3 disordered regions span residues 474–520 (DNPL…GSHS), 563–624 (PASV…QRMH), and 684–704 (PAGYGTEPCRMTLKQEPETGY). Over residues 487 to 512 (DYQSPTHTGNMEGGNQVNSSLDSLAT) the composition is skewed to polar residues. Over residues 563–574 (PASVAPASISPP) the composition is skewed to low complexity. Residues 608–620 (GSRSGPLPTQHSP) are compositionally biased toward polar residues.

Belongs to the nuclear hormone receptor family. NR2 subfamily. Homodimer. In terms of tissue distribution, in third instar larvae, expressed at high levels in midgut and attached gastric caeca, fat body, Malpighian tubules and oenocytes, and at lower levels in proventriculus, salivary glands, epidermis, brain and ring gland. Not detected in imaginal disks and the median neurosecretory cells that produce insulin-like peptides (at protein level). In developing embryos, expressed in mid-gut, fat bodies and the distal region of Malpighian tubules.

It is found in the nucleus. Functionally, transcriptionally controlled transcription factor. Important for the differentiation of various specialized cell types that arise from both endoderm and mesoderm. May have a role in early gut formation. Plays an essential role in lipid catabolism, regulating lipid mobilization and beta-oxidation in response to nutrient deprivation. The sequence is that of Transcription factor HNF-4 homolog (Hnf4) from Drosophila melanogaster (Fruit fly).